We begin with the raw amino-acid sequence, 172 residues long: Protein GrpE (172 aa).

A compositionally biased stretch (low complexity) spans 1 to 11 (MSEENNSQNSN). The disordered stretch occupies residues 1 to 22 (MSEENNSQNSNPPNPENGEIAS).

The protein belongs to the GrpE family. As to quaternary structure, homodimer.

The protein resides in the cytoplasm. Participates actively in the response to hyperosmotic and heat shock by preventing the aggregation of stress-denatured proteins, in association with DnaK and GrpE. It is the nucleotide exchange factor for DnaK and may function as a thermosensor. Unfolded proteins bind initially to DnaJ; upon interaction with the DnaJ-bound protein, DnaK hydrolyzes its bound ATP, resulting in the formation of a stable complex. GrpE releases ADP from DnaK; ATP binding to DnaK triggers the release of the substrate protein, thus completing the reaction cycle. Several rounds of ATP-dependent interactions between DnaJ, DnaK and GrpE are required for fully efficient folding. This chain is Protein GrpE, found in Bdellovibrio bacteriovorus (strain ATCC 15356 / DSM 50701 / NCIMB 9529 / HD100).